Consider the following 568-residue polypeptide: Urease subunit alpha (568 aa).

The Urease domain maps to 131–568 (GGIDTHIHFI…LPMAQRYFLF (438 aa)). Residues H136, H138, and K219 each coordinate Ni(2+). The residue at position 219 (K219) is an N6-carboxylysine. A substrate-binding site is contributed by H221. Ni(2+) is bound by residues H248 and H274. H322 functions as the Proton donor in the catalytic mechanism. D362 lines the Ni(2+) pocket.

This sequence belongs to the metallo-dependent hydrolases superfamily. Urease alpha subunit family. In terms of assembly, heterotrimer of UreA (gamma), UreB (beta) and UreC (alpha) subunits. Three heterotrimers associate to form the active enzyme. It depends on Ni cation as a cofactor. Post-translationally, carboxylation allows a single lysine to coordinate two nickel ions.

The protein localises to the cytoplasm. It catalyses the reaction urea + 2 H2O + H(+) = hydrogencarbonate + 2 NH4(+). The protein operates within nitrogen metabolism; urea degradation; CO(2) and NH(3) from urea (urease route): step 1/1. The polypeptide is Urease subunit alpha (Trichormus variabilis (strain ATCC 29413 / PCC 7937) (Anabaena variabilis)).